Consider the following 495-residue polypeptide: MSVALWQQCLNFLQDELSSQQFNTWIRPLQAEDGDANELCLLAPNRFVRDWVNDKYLKRINELLRDLASGKPPKVQLTVGSRRNVAMSSPRDLGAPVSATTMNASRPTEAPAVHAAPRAKGDYADEQEIDRLREREETPRRGGGERQVQVEGSLKHQSGLNPNFTFETFVEGKSNQLARAASRQVAENPGGAYNPLFLYGGVGLGKTHLMHAVGNHLAGQRENAKVVYLHSERFVADMVKALQLNAINDFKRFYRSVDALLIDDIQFFAGKERSQEEFFHTFNALLEGGQQMILTSDRYPKEISGVEERLKSRFGWGLTVAIEPPELETRVAILMKKADQAKVDLPHDAAFFIAQKIRSNVRELEGALKKVIADSHFMGKPITQDFIRESLKDLLALQDKQVGVDNIQRTVAEYYKIKLADLLSKRRSRSVARPRQVAMALAKELTNHSLPEIGDAFGGRDHTTVLHACRKVQTLKEESADIREDYKNLLRLLTS.

Positions 1-83 are domain I, interacts with DnaA modulators; sequence MSVALWQQCL…KVQLTVGSRR (83 aa). The segment at 83 to 158 is domain II; that stretch reads RNVAMSSPRD…QVEGSLKHQS (76 aa). The segment at 86 to 127 is disordered; that stretch reads AMSSPRDLGAPVSATTMNASRPTEAPAVHAAPRAKGDYADEQ. The interval 159–375 is domain III, AAA+ region; that stretch reads GLNPNFTFET…GALKKVIADS (217 aa). ATP contacts are provided by glycine 203, glycine 205, lysine 206, and threonine 207. Residues 376 to 495 form a domain IV, binds dsDNA region; that stretch reads HFMGKPITQD…YKNLLRLLTS (120 aa).

It belongs to the DnaA family. As to quaternary structure, oligomerizes as a right-handed, spiral filament on DNA at oriC.

Its subcellular location is the cytoplasm. Functionally, plays an essential role in the initiation and regulation of chromosomal replication. ATP-DnaA binds to the origin of replication (oriC) to initiate formation of the DNA replication initiation complex once per cell cycle. Binds the DnaA box (a 9 base pair repeat at the origin) and separates the double-stranded (ds)DNA. Forms a right-handed helical filament on oriC DNA; dsDNA binds to the exterior of the filament while single-stranded (ss)DNA is stabiized in the filament's interior. The ATP-DnaA-oriC complex binds and stabilizes one strand of the AT-rich DNA unwinding element (DUE), permitting loading of DNA polymerase. After initiation quickly degrades to an ADP-DnaA complex that is not apt for DNA replication. Binds acidic phospholipids. The chain is Chromosomal replication initiator protein DnaA from Chromohalobacter salexigens (strain ATCC BAA-138 / DSM 3043 / CIP 106854 / NCIMB 13768 / 1H11).